Consider the following 410-residue polypeptide: 3-phosphoshikimate 1-carboxyvinyltransferase (410 aa).

3 residues coordinate 3-phosphoshikimate: Lys-21, Ser-22, and Arg-26. Lys-21 contributes to the phosphoenolpyruvate binding site. Gly-69 and Arg-97 together coordinate phosphoenolpyruvate. 3-phosphoshikimate is bound by residues Ser-143, Ser-144, Gln-145, Ser-171, Asp-288, and Lys-315. Phosphoenolpyruvate is bound at residue Gln-145. Asp-288 (proton acceptor) is an active-site residue. Positions 319, 364, and 389 each coordinate phosphoenolpyruvate.

This sequence belongs to the EPSP synthase family. In terms of assembly, monomer.

It is found in the cytoplasm. The enzyme catalyses 3-phosphoshikimate + phosphoenolpyruvate = 5-O-(1-carboxyvinyl)-3-phosphoshikimate + phosphate. Its pathway is metabolic intermediate biosynthesis; chorismate biosynthesis; chorismate from D-erythrose 4-phosphate and phosphoenolpyruvate: step 6/7. Catalyzes the transfer of the enolpyruvyl moiety of phosphoenolpyruvate (PEP) to the 5-hydroxyl of shikimate-3-phosphate (S3P) to produce enolpyruvyl shikimate-3-phosphate and inorganic phosphate. In Bacteroides fragilis (strain ATCC 25285 / DSM 2151 / CCUG 4856 / JCM 11019 / LMG 10263 / NCTC 9343 / Onslow / VPI 2553 / EN-2), this protein is 3-phosphoshikimate 1-carboxyvinyltransferase.